Consider the following 557-residue polypeptide: Ribonuclease J 2 (557 aa).

Zn(2+)-binding residues include histidine 76, histidine 78, histidine 144, and glutamate 166. 366 to 370 (HASSH) is a substrate binding site.

It belongs to the metallo-beta-lactamase superfamily. RNA-metabolizing metallo-beta-lactamase-like family. Bacterial RNase J subfamily. Homodimer. Component of a possible RNA degradosome complex composed of cshA, eno, pfkA, pnp, rnjA, rnjB, rnpA and rny. Interacts specifically with RNase J1. Zn(2+) is required as a cofactor.

Its subcellular location is the cytoplasm. Its function is as follows. An RNase that has 5'-3' exonuclease and endonuclease activity, with the exonuclease activity probably being most important in vivo. Involved in maturation of 16S rRNA, rnpB (the RNA component of RNase P) maturation and degradation, and mRNA maturation and/or decay. This subunit probably plays a structural rather than enzymatic role as mutation of its putative active site gives no phenotype, and its deletion is partially complemented by inactive RNase J1. This chain is Ribonuclease J 2, found in Staphylococcus aureus (strain NCTC 8325 / PS 47).